A 349-amino-acid chain; its full sequence is AdoMet-dependent heme synthase (349 aa).

Positions 5-214 constitute a Radical SAM core domain; sequence TNAPRLIAWE…LHWFYEMQKE (210 aa). [4Fe-4S] cluster-binding residues include C19, C23, and C26.

Belongs to the radical SAM superfamily. [4Fe-4S] cluster serves as cofactor.

The enzyme catalyses Fe-coproporphyrin III + 2 S-adenosyl-L-methionine = heme b + 2 5'-deoxyadenosine + 2 L-methionine + 2 CO2. It participates in porphyrin-containing compound metabolism; protoheme biosynthesis. Its function is as follows. Involved in siroheme-dependent heme b biosynthesis. Catalyzes the conversion of Fe-coproporphyrin III into heme by the oxidative decarboxylation of two propionate side chains. The sequence is that of AdoMet-dependent heme synthase from Methanosarcina barkeri (strain Fusaro / DSM 804).